A 121-amino-acid polypeptide reads, in one-letter code: UPF0102 protein BHWA1_02005 (121 aa).

The protein belongs to the UPF0102 family.

The protein is UPF0102 protein BHWA1_02005 of Brachyspira hyodysenteriae (strain ATCC 49526 / WA1).